A 318-amino-acid chain; its full sequence is Oxygen-evolving enhancer protein 1, chloroplastic (318 aa).

The N-terminal stretch at Met1 to Ala18 is a signal peptide. The chain crosses the membrane as a helical span at residues Ala45–Ile65.

It belongs to the PsbO family.

The protein localises to the plastid. Its subcellular location is the chloroplast thylakoid membrane. In terms of biological role, stabilizes the manganese cluster which is the primary site of water splitting. This Chattonella marina var. antiqua (Red tide flagellate) protein is Oxygen-evolving enhancer protein 1, chloroplastic.